We begin with the raw amino-acid sequence, 130 residues long: Glycine cleavage system H protein (130 aa).

Residues 24 to 106 enclose the Lipoyl-binding domain; it reads GIKVGISAFA…YQEGWLLKIT (83 aa). Lys65 is subject to N6-lipoyllysine.

This sequence belongs to the GcvH family. In terms of assembly, the glycine cleavage system is composed of four proteins: P, T, L and H. It depends on (R)-lipoate as a cofactor.

The glycine cleavage system catalyzes the degradation of glycine. The H protein shuttles the methylamine group of glycine from the P protein to the T protein. This chain is Glycine cleavage system H protein, found in Synechococcus sp. (strain RCC307).